We begin with the raw amino-acid sequence, 266 residues long: Heat-inducible transcription repressor HrcA (266 aa).

It belongs to the HrcA family.

Negative regulator of class I heat shock genes (grpE-dnaK-dnaJ and groELS operons). Prevents heat-shock induction of these operons. The sequence is that of Heat-inducible transcription repressor HrcA from Helicobacter pylori (strain J99 / ATCC 700824) (Campylobacter pylori J99).